We begin with the raw amino-acid sequence, 861 residues long: Rod cGMP-specific 3',5'-cyclic phosphodiesterase subunit alpha (861 aa).

N-acetylglycine is present on G2. GAF domains are found at residues 73-222 and 254-431; these read QAER…NLIM and DIER…GWSV. One can recognise a PDEase domain in the interval 483–816; sequence EEEELAEILQ…KEWKALADEY (334 aa). Catalysis depends on H559, which acts as the Proton donor. Residues H563, H599, D600, and D720 each contribute to the a divalent metal cation site. Positions 821-861 are disordered; the sequence is KALEEEKQKQQTAKQGAAGDQPGGNPSPAGGAPASKSCCIQ. The span at 830–861 shows a compositional bias: low complexity; the sequence is QQTAKQGAAGDQPGGNPSPAGGAPASKSCCIQ. C858 carries the post-translational modification Cysteine methyl ester. Residue C858 is the site of S-farnesyl cysteine attachment. Positions 859 to 861 are cleaved as a propeptide — removed in mature form; the sequence is CIQ.

It belongs to the cyclic nucleotide phosphodiesterase family. As to quaternary structure, oligomer composed of two catalytic chains (alpha and beta), an inhibitory chain (gamma) and the delta chain. The cofactor is a divalent metal cation.

The protein localises to the cell membrane. It is found in the cell projection. It localises to the cilium. Its subcellular location is the photoreceptor outer segment. It carries out the reaction 3',5'-cyclic GMP + H2O = GMP + H(+). In terms of biological role, rod-specific cGMP phosphodiesterase that catalyzes the hydrolysis of 3',5'-cyclic GMP. This protein participates in processes of transmission and amplification of the visual signal. The protein is Rod cGMP-specific 3',5'-cyclic phosphodiesterase subunit alpha of Canis lupus familiaris (Dog).